A 277-amino-acid polypeptide reads, in one-letter code: 2-dehydro-3-deoxyphosphooctonate aldolase (277 aa).

It belongs to the KdsA family.

Its subcellular location is the cytoplasm. It carries out the reaction D-arabinose 5-phosphate + phosphoenolpyruvate + H2O = 3-deoxy-alpha-D-manno-2-octulosonate-8-phosphate + phosphate. It participates in carbohydrate biosynthesis; 3-deoxy-D-manno-octulosonate biosynthesis; 3-deoxy-D-manno-octulosonate from D-ribulose 5-phosphate: step 2/3. The protein operates within bacterial outer membrane biogenesis; lipopolysaccharide biosynthesis. The chain is 2-dehydro-3-deoxyphosphooctonate aldolase from Alkalilimnicola ehrlichii (strain ATCC BAA-1101 / DSM 17681 / MLHE-1).